Consider the following 305-residue polypeptide: Acetyl-coenzyme A carboxylase carboxyl transferase subunit beta (305 aa).

Positions 25-293 (LWVQCPACQQ…LPKVESVASL (269 aa)) constitute a CoA carboxyltransferase N-terminal domain. C29, C32, C48, and C51 together coordinate Zn(2+). Residues 29-51 (CPACQQMIFARDLEKNQRVCTHC) form a C4-type zinc finger.

It belongs to the AccD/PCCB family. As to quaternary structure, acetyl-CoA carboxylase is a heterohexamer composed of biotin carboxyl carrier protein (AccB), biotin carboxylase (AccC) and two subunits each of ACCase subunit alpha (AccA) and ACCase subunit beta (AccD). The cofactor is Zn(2+).

It localises to the cytoplasm. The catalysed reaction is N(6)-carboxybiotinyl-L-lysyl-[protein] + acetyl-CoA = N(6)-biotinyl-L-lysyl-[protein] + malonyl-CoA. It functions in the pathway lipid metabolism; malonyl-CoA biosynthesis; malonyl-CoA from acetyl-CoA: step 1/1. Component of the acetyl coenzyme A carboxylase (ACC) complex. Biotin carboxylase (BC) catalyzes the carboxylation of biotin on its carrier protein (BCCP) and then the CO(2) group is transferred by the transcarboxylase to acetyl-CoA to form malonyl-CoA. The chain is Acetyl-coenzyme A carboxylase carboxyl transferase subunit beta from Granulibacter bethesdensis (strain ATCC BAA-1260 / CGDNIH1).